A 218-amino-acid polypeptide reads, in one-letter code: Octanoyltransferase (218 aa).

The region spanning 30–212 is the BPL/LPL catalytic domain; the sequence is ENTADEIWLV…HFYNILGYNA (183 aa). Substrate-binding positions include 69 to 76, 141 to 143, and 154 to 156; these read RGGQITYH, SLG, and GLA. C172 (acyl-thioester intermediate) is an active-site residue.

It belongs to the LipB family.

It localises to the cytoplasm. It catalyses the reaction octanoyl-[ACP] + L-lysyl-[protein] = N(6)-octanoyl-L-lysyl-[protein] + holo-[ACP] + H(+). Its pathway is protein modification; protein lipoylation via endogenous pathway; protein N(6)-(lipoyl)lysine from octanoyl-[acyl-carrier-protein]: step 1/2. Functionally, catalyzes the transfer of endogenously produced octanoic acid from octanoyl-acyl-carrier-protein onto the lipoyl domains of lipoate-dependent enzymes. Lipoyl-ACP can also act as a substrate although octanoyl-ACP is likely to be the physiological substrate. The protein is Octanoyltransferase of Actinobacillus pleuropneumoniae serotype 5b (strain L20).